A 1086-amino-acid chain; its full sequence is Bifunctional helicase and thymine dioxygenase JBP2 (1086 aa).

Residues 1 to 518 (MPVPSHVSVA…PPIYLPGRLL (518 aa)) form a thymine dioxygenase region. The interval 187 to 220 (DESNRGVLFNSDSFGNGRGGSSISSSERSVDEND) is disordered. Fe cation-binding residues include His-393, Asp-395, and His-443. Residue Arg-457 coordinates 2-oxoglutarate. The interval 519–1084 (EVLSPVQQAA…RHGDTVRSES (566 aa)) is DNA Helicase. Positions 533–708 (VDRLSKGNGC…YRLIGWINSD (176 aa)) constitute a Helicase ATP-binding domain. ATP is bound at residue 546–553 (LTMGLGKT). The DEAH box motif lies at 659–662 (DEGH). One can recognise a Helicase C-terminal domain in the interval 883–1041 (VLISILHSIR…RAVPPEELLD (159 aa)).

The protein in the C-terminal section; belongs to the SNF2/RAD54 helicase family. This sequence in the N-terminal section; belongs to the TET family. JBP2 subfamily. The cofactor is Fe(2+).

It localises to the nucleus. The enzyme catalyses ATP + H2O = ADP + phosphate + H(+). It carries out the reaction thymine + 2-oxoglutarate + O2 = 5-hydroxymethyluracil + succinate + CO2. Dioxygenase that catalyzes the first step of DNA base J (beta-d-glucosyl-HOMedU) biosynthesis by converting thymine to 5-hydroxymethyluracil (HOMedU). DNA base J is a hypermodified thymidine residue found in the genome of kinetoplastid parasites, which is localized primarily to repetitive DNA, namely the telomeres, and is implicated in the regulation of antigenic variation. Probably also acts as a DNA helicase. Recognizes and binds specific regions of the genome, hydrolyzes ATP and allows the DNA base J de novo synthesis. Involved in initial synthesis of DNA base J, JBP1 being able to act via the basal level of DNA base J and propagate further synthesis. In contrast to JBP1, it does not specifically bind DNA base J, however it binds chromatin. The protein is Bifunctional helicase and thymine dioxygenase JBP2 (JBP2) of Trypanosoma cruzi (strain CL Brener).